The sequence spans 431 residues: Histidine--tRNA ligase (431 aa).

The disordered stretch occupies residues 1–20; it reads MALQRPKGTQDHLPDGSPKL.

Belongs to the class-II aminoacyl-tRNA synthetase family. Homodimer.

The protein resides in the cytoplasm. It catalyses the reaction tRNA(His) + L-histidine + ATP = L-histidyl-tRNA(His) + AMP + diphosphate + H(+). The sequence is that of Histidine--tRNA ligase from Deinococcus geothermalis (strain DSM 11300 / CIP 105573 / AG-3a).